The chain runs to 380 residues: Phosphate acyltransferase (380 aa).

The segment at 1-23 (MPSPPPTPETATASDRTATPAPG) is disordered.

Belongs to the PlsX family. As to quaternary structure, homodimer. Probably interacts with PlsY.

The protein localises to the cytoplasm. It carries out the reaction a fatty acyl-[ACP] + phosphate = an acyl phosphate + holo-[ACP]. The protein operates within lipid metabolism; phospholipid metabolism. Functionally, catalyzes the reversible formation of acyl-phosphate (acyl-PO(4)) from acyl-[acyl-carrier-protein] (acyl-ACP). This enzyme utilizes acyl-ACP as fatty acyl donor, but not acyl-CoA. In Acidiphilium cryptum (strain JF-5), this protein is Phosphate acyltransferase.